A 105-amino-acid polypeptide reads, in one-letter code: Large ribosomal subunit protein uL24 (105 aa).

Positions 40 to 61 (RIKKHTPQSANERGASSGGIVT) are disordered.

It belongs to the universal ribosomal protein uL24 family. As to quaternary structure, part of the 50S ribosomal subunit.

In terms of biological role, one of two assembly initiator proteins, it binds directly to the 5'-end of the 23S rRNA, where it nucleates assembly of the 50S subunit. Functionally, one of the proteins that surrounds the polypeptide exit tunnel on the outside of the subunit. This Mycobacteroides abscessus (strain ATCC 19977 / DSM 44196 / CCUG 20993 / CIP 104536 / JCM 13569 / NCTC 13031 / TMC 1543 / L948) (Mycobacterium abscessus) protein is Large ribosomal subunit protein uL24.